The chain runs to 499 residues: Putative antiporter subunit mnhD2 (499 aa).

The next 14 membrane-spanning stretches (helical) occupy residues 3-23 (SNLL…LVFT), 32-52 (ILYI…LIYV), 78-98 (LSLV…SYGF), 108-128 (YYLP…FLTS), 130-150 (LFNL…LVTL), 161-181 (IIYV…IGLL), 206-226 (IIII…LVLF), 240-260 (LAAL…IRFF), 273-293 (PLLV…VIAY), 308-328 (IGFV…GAIF), 330-350 (LAND…LVYM), 368-388 (FFGV…PFSG), 403-423 (GNFI…YSLF), and 450-470 (TILG…PVVM).

The protein belongs to the CPA3 antiporters (TC 2.A.63) subunit D family. May form a heterooligomeric complex that consists of seven subunits: mnhA2, mnhB2, mnhC2, mnhD2, mnhE2, mnhF2 and mnhG2.

The protein resides in the cell membrane. The chain is Putative antiporter subunit mnhD2 (mnhD2) from Staphylococcus haemolyticus (strain JCSC1435).